A 310-amino-acid chain; its full sequence is D-alanyl-D-alanine endopeptidase (310 aa).

A signal peptide spans 1-23 (MRNRLLSLVTLFLSLSVATAVSA). Residue S66 is the Acyl-ester intermediate of the active site. The active-site Proton acceptor is the K69. S123 is a catalytic residue. K230 lines the substrate pocket.

Belongs to the peptidase S11 family.

It is found in the periplasm. Functionally, cell wall formation. This is D-alanyl-D-alanine endopeptidase (pbpG) from Pseudomonas aeruginosa (strain ATCC 15692 / DSM 22644 / CIP 104116 / JCM 14847 / LMG 12228 / 1C / PRS 101 / PAO1).